The following is a 544-amino-acid chain: Chaperonin GroEL (544 aa).

Residues 29–32 (TLGP), 86–90 (DGTTT), G413, 476–478 (NAA), and D492 contribute to the ATP site.

Belongs to the chaperonin (HSP60) family. Forms a cylinder of 14 subunits composed of two heptameric rings stacked back-to-back. Interacts with the co-chaperonin GroES.

The protein localises to the cytoplasm. It carries out the reaction ATP + H2O + a folded polypeptide = ADP + phosphate + an unfolded polypeptide.. Its function is as follows. Together with its co-chaperonin GroES, plays an essential role in assisting protein folding. The GroEL-GroES system forms a nano-cage that allows encapsulation of the non-native substrate proteins and provides a physical environment optimized to promote and accelerate protein folding. This is Chaperonin GroEL from Bacillus cereus.